A 369-amino-acid chain; its full sequence is Putative F-box protein At1g70960 (369 aa).

An F-box domain is found at 3 to 54 (NTSFETLPRHMQMEILSRVPLKFLMKFMCVSKKWASIIRGEEFREDYLFQSM).

The chain is Putative F-box protein At1g70960 from Arabidopsis thaliana (Mouse-ear cress).